The primary structure comprises 365 residues: Probable cinnamyl alcohol dehydrogenase (365 aa).

Cysteine 47 provides a ligand contact to Zn(2+). Threonine 49 serves as a coordination point for NADP(+). 7 residues coordinate Zn(2+): histidine 69, glutamate 70, cysteine 100, cysteine 103, cysteine 106, cysteine 114, and cysteine 163. NADP(+)-binding positions include threonine 167, 188-193 (GLGGVG), 211-216 (SSSSKK), threonine 251, glycine 275, and 298-300 (SFI).

This sequence belongs to the zinc-containing alcohol dehydrogenase family. As to quaternary structure, homodimer. It depends on Zn(2+) as a cofactor.

It carries out the reaction (E)-cinnamyl alcohol + NADP(+) = (E)-cinnamaldehyde + NADPH + H(+). The catalysed reaction is (E)-coniferol + NADP(+) = (E)-coniferaldehyde + NADPH + H(+). It catalyses the reaction (E)-sinapyl alcohol + NADP(+) = (E)-sinapaldehyde + NADPH + H(+). The enzyme catalyses (E)-4-coumaroyl alcohol + NADP(+) = (E)-4-coumaraldehyde + NADPH + H(+). It carries out the reaction (E)-caffeyl alcohol + NADP(+) = (E)-caffeyl aldehyde + NADPH + H(+). It participates in aromatic compound metabolism; phenylpropanoid biosynthesis. In terms of biological role, involved in lignin biosynthesis. Catalyzes the final step specific for the production of lignin monomers. Catalyzes the NADPH-dependent reduction of coniferaldehyde, 5-hydroxyconiferaldehyde, sinapaldehyde, 4-coumaraldehyde and caffeyl aldehyde to their respective alcohols. The chain is Probable cinnamyl alcohol dehydrogenase (CAD) from Saccharum officinarum (Sugarcane).